A 1226-amino-acid chain; its full sequence is Methionine synthase (1226 aa).

Positions 7–327 (KVQIEKQLSE…EHIRQMALVV (321 aa)) constitute a Hcy-binding domain. 3 residues coordinate Zn(2+): Cys-249, Cys-312, and Cys-313. Positions 358 to 619 (FINVGERTNV…VPEDLREAVE (262 aa)) constitute a Pterin-binding domain. The 95-residue stretch at 652 to 746 (SALEWRDWPV…FINASKEVGA (95 aa)) folds into the B12-binding N-terminal domain. Methylcob(III)alamin is bound by residues Glu-696, 758-762 (GDVHD), His-761, Ser-806, Thr-810, and Ala-862. One can recognise a B12-binding domain in the interval 748–883 (NGKILLATVK…SNELKPSFVE (136 aa)). An AdoMet activation domain is found at 899–1226 (KQPRTKPVTL…AEKWLGPNLN (328 aa)). Residues Asp-949, Arg-1137, and 1192–1193 (YF) each bind S-adenosyl-L-methionine.

It belongs to the vitamin-B12 dependent methionine synthase family. Methylcob(III)alamin is required as a cofactor. Requires Zn(2+) as cofactor.

The catalysed reaction is (6S)-5-methyl-5,6,7,8-tetrahydrofolate + L-homocysteine = (6S)-5,6,7,8-tetrahydrofolate + L-methionine. Its pathway is amino-acid biosynthesis; L-methionine biosynthesis via de novo pathway; L-methionine from L-homocysteine (MetH route): step 1/1. Its function is as follows. Catalyzes the transfer of a methyl group from methyl-cobalamin to homocysteine, yielding enzyme-bound cob(I)alamin and methionine. Subsequently, remethylates the cofactor using methyltetrahydrofolate. The chain is Methionine synthase (metH) from Aliivibrio fischeri (Vibrio fischeri).